The following is a 613-amino-acid chain: Probable inactive purple acid phosphatase 1 (613 aa).

The N-terminal stretch at 1–24 (MRESLVAILVTVISVLGAIHQVKS) is a signal peptide. N-linked (GlcNAc...) asparagine glycans are attached at residues N89 and N116. D295 lines the Fe cation pocket. N316 is a glycosylation site (N-linked (GlcNAc...) asparagine). The Fe cation site is built by D336 and Y339. D336 contacts Zn(2+). Residues N369, H458, and H500 each coordinate Zn(2+). Residue N369 coordinates substrate. 500–502 (HAH) serves as a coordination point for substrate. H502 provides a ligand contact to Fe cation. N528 and N551 each carry an N-linked (GlcNAc...) asparagine glycan.

Belongs to the metallophosphoesterase superfamily. Purple acid phosphatase family. As to quaternary structure, homodimer. It depends on Fe cation as a cofactor. Requires Zn(2+) as cofactor. Expressed in roots, stems, leaves, flowers and siliques.

It localises to the secreted. The protein is Probable inactive purple acid phosphatase 1 (PAP1) of Arabidopsis thaliana (Mouse-ear cress).